Here is a 146-residue protein sequence, read N- to C-terminus: Large ribosomal subunit protein uL15 (146 aa).

Positions 1–13 (MKLHELKPAEGSR) are enriched in basic and acidic residues. Residues 1–57 (MKLHELKPAEGSRKVRNRVGRGTSSGNGKTSGRGQKGQKARSGVGLRPGFEGGQTPL) are disordered. A compositionally biased stretch (gly residues) spans 23–35 (TSSGNGKTSGRGQ).

This sequence belongs to the universal ribosomal protein uL15 family. Part of the 50S ribosomal subunit.

Binds to the 23S rRNA. The chain is Large ribosomal subunit protein uL15 from Streptococcus thermophilus (strain CNRZ 1066).